Here is a 759-residue protein sequence, read N- to C-terminus: DNA topoisomerase 4 subunit A (759 aa).

In terms of domain architecture, Topo IIA-type catalytic spans 44–516; that stretch reads LPDVRDGLKP…VFGEAPQVDA (473 aa). The active-site O-(5'-phospho-DNA)-tyrosine intermediate is Y132.

This sequence belongs to the type II topoisomerase GyrA/ParC subunit family. ParC type 1 subfamily. Heterotetramer composed of ParC and ParE.

It localises to the cell membrane. The enzyme catalyses ATP-dependent breakage, passage and rejoining of double-stranded DNA.. In terms of biological role, topoisomerase IV is essential for chromosome segregation. It relaxes supercoiled DNA. Performs the decatenation events required during the replication of a circular DNA molecule. The polypeptide is DNA topoisomerase 4 subunit A (Caulobacter vibrioides (strain ATCC 19089 / CIP 103742 / CB 15) (Caulobacter crescentus)).